Here is a 465-residue protein sequence, read N- to C-terminus: Kynureninase (465 aa).

Pyridoxal 5'-phosphate contacts are provided by residues leucine 133, threonine 134, 161 to 164, serine 217, aspartate 246, histidine 249, and tyrosine 271; that span reads FPSD. Lysine 272 is subject to N6-(pyridoxal phosphate)lysine. Residues tryptophan 302 and asparagine 330 each contribute to the pyridoxal 5'-phosphate site.

The protein belongs to the kynureninase family. Homodimer. Pyridoxal 5'-phosphate serves as cofactor.

The protein localises to the cytoplasm. It catalyses the reaction L-kynurenine + H2O = anthranilate + L-alanine + H(+). The enzyme catalyses 3-hydroxy-L-kynurenine + H2O = 3-hydroxyanthranilate + L-alanine + H(+). Its pathway is amino-acid degradation; L-kynurenine degradation; L-alanine and anthranilate from L-kynurenine: step 1/1. It participates in cofactor biosynthesis; NAD(+) biosynthesis; quinolinate from L-kynurenine: step 2/3. Functionally, catalyzes the cleavage of L-kynurenine (L-Kyn) and L-3-hydroxykynurenine (L-3OHKyn) into anthranilic acid (AA) and 3-hydroxyanthranilic acid (3-OHAA), respectively. The chain is Kynureninase from Nematostella vectensis (Starlet sea anemone).